The chain runs to 370 residues: Platelet-derived growth factor D (370 aa).

An N-terminal signal peptide occupies residues 1–23 (MHRLILVSILVCANFCCYRDTFA). In terms of domain architecture, CUB spans 52 to 170 (RDENIRVTGT…PGFKIYYSFV (119 aa)). Residues cysteine 109 and cysteine 131 are joined by a disulfide bond. Asparagine 276 is a glycosylation site (N-linked (GlcNAc...) asparagine). Disulfide bonds link cysteine 302/cysteine 360 and cysteine 306/cysteine 362.

This sequence belongs to the PDGF/VEGF growth factor family. As to quaternary structure, homodimer; disulfide-linked. Interacts with PDGFRB homodimers, and with heterodimers formed by PDGFRA and PDGFRB. Post-translationally, activated by proteolytic cleavage. Proteolytic removal of the N-terminal CUB domain releasing the core domain is necessary for unmasking the receptor-binding epitopes of the core domain. Cleavage after Arg-247 or Arg-249 by urokinase plasminogen activator gives rise to the active form. Widely expressed. Expressed at high levels in the kidney, adrenal glands, eye and CNS. In the kidney the localization is confined to arterial and arteriolar vascular smooth muscle cells and is also detected at low levels in the glomeruli In the eye in the anterior segment it is localized to the iris and ciliary body. In the retina localizes intensely to the outer plexiform layer, which contains photoreceptor axons and the synaptic layer between photoreceptors and second order neurons. In the spinal cord, prominently expressed in the motorneurons.

The protein resides in the secreted. Functionally, growth factor that plays an essential role in the regulation of embryonic development, cell proliferation, cell migration, survival and chemotaxis. Potent mitogen for cells of mesenchymal origin. Plays an important role in wound healing. Induces macrophage recruitment, increased interstitial pressure, and blood vessel maturation during angiogenesis. May play an important role in control of lens epithelial cell proliferation. Can initiate events that lead to a mesangial proliferative glomerulonephritis, including influx of monocytes and macrophages and production of extracellular matrix. The chain is Platelet-derived growth factor D (Pdgfd) from Rattus norvegicus (Rat).